We begin with the raw amino-acid sequence, 514 residues long: MGALLRALLLPLLAQWLLRAVPVLAPAPFTLPLQVAGAANHRASTVPGLGTPELPRADGLALALEPARATANFLAMVDNLQGDSGRGYYLEMLIGTPPQKVRILVDTGSSNFAVAGAPHSYIDTYFDSESSSTYHSKGFEVTVKYTQGSWTGFVGEDLVTIPKGFNSSFLVNIATIFESENFFLPGIKWNGILGLAYAALAKPSSSLETFFDSLVAQAKIPDIFSMQMCGAGLPVAGSGTNGGSLVLGGIEPSLYKGDIWYTPIKEEWYYQIEILKLEIGGQSLNLDCREYNADKAIVDSGTTLLRLPQKVFDAVVEAVARTSLIPEFSDGFWTGAQLACWTNSETPWAYFPKISIYLRDENASRSFRITILPQLYIQPMMGAGFNYECYRFGISSSTNALVIGATVMEGFYVVFDRAQRRVGFAVSPCAEIAGTTVSEISGPFSTEDIASNCVPAQALNEPILWIVSYALMSVCGAILLVLILLLLFPLHCRHAPRDPEVVNDESSLVRHRWK.

Residues 1–20 form the signal peptide; the sequence is MGALLRALLLPLLAQWLLRA. Residues 21 to 62 constitute a propeptide that is removed on maturation; it reads VPVLAPAPFTLPLQVAGAANHRASTVPGLGTPELPRADGLAL. Topologically, residues 21-469 are extracellular; sequence VPVLAPAPFT…NEPILWIVSY (449 aa). Residues 88-425 form the Peptidase A1 domain; that stretch reads YYLEMLIGTP…DRAQRRVGFA (338 aa). D106 is a catalytic residue. N-linked (GlcNAc...) asparagine glycosylation is present at N166. Disulfide bonds link C229-C429, C288-C453, and C340-C389. D299 is a catalytic residue. The N-linked (GlcNAc...) asparagine glycan is linked to N362. A helical membrane pass occupies residues 470–490; sequence ALMSVCGAILLVLILLLLFPL. The Cytoplasmic portion of the chain corresponds to 491 to 514; that stretch reads HCRHAPRDPEVVNDESSLVRHRWK.

The protein belongs to the peptidase A1 family. Monomer. Interacts with RTN3 and RTN4. Post-translationally, undergoes autoproteolytic cleavage. In terms of processing, glycosylated.

It is found in the cell membrane. It localises to the golgi apparatus. The protein localises to the endoplasmic reticulum. The protein resides in the endosome. Its subcellular location is the melanosome. The catalysed reaction is Broad endopeptidase specificity. Cleaves Glu-Val-Asn-Leu-|-Asp-Ala-Glu-Phe in the Swedish variant of Alzheimer's amyloid precursor protein.. Its function is as follows. Responsible for the proteolytic processing of the amyloid precursor protein (APP). Cleaves APP, between residues 690 and 691, leading to the generation and extracellular release of beta-cleaved soluble APP, and a corresponding cell-associated C-terminal fragment which is later released by gamma-secretase. It has also been shown that it can cleave APP between residues 671 and 672. Involved in the proteolytic shedding of PMEL at early stages of melanosome biogenesis. Cleaves PMEL within the M-beta fragment to release the amyloidogenic PMEL luminal fragment containing M-alpha and a small portion of M-beta N-terminus. This is a prerequisite step for subsequent processing and assembly of PMEL fibrils into amyloid sheets. Responsible also for the proteolytic processing of CLTRN in pancreatic beta cells. This Rattus norvegicus (Rat) protein is Beta-secretase 2 (Bace2).